A 500-amino-acid polypeptide reads, in one-letter code: Glycerol kinase (500 aa).

Threonine 11 contributes to the ADP binding site. ATP is bound by residues threonine 11, threonine 12, and serine 13. Position 11 (threonine 11) interacts with sn-glycerol 3-phosphate. Arginine 15 contacts ADP. 4 residues coordinate sn-glycerol 3-phosphate: arginine 81, glutamate 82, tyrosine 133, and aspartate 242. Glycerol is bound by residues arginine 81, glutamate 82, tyrosine 133, aspartate 242, and glutamine 243. Positions 264 and 307 each coordinate ADP. Residues threonine 264, glycine 307, glutamine 311, and glycine 411 each contribute to the ATP site. Position 411 (glycine 411) interacts with ADP.

The protein belongs to the FGGY kinase family.

It carries out the reaction glycerol + ATP = sn-glycerol 3-phosphate + ADP + H(+). It functions in the pathway polyol metabolism; glycerol degradation via glycerol kinase pathway; sn-glycerol 3-phosphate from glycerol: step 1/1. Inhibited by fructose 1,6-bisphosphate (FBP). Its function is as follows. Key enzyme in the regulation of glycerol uptake and metabolism. Catalyzes the phosphorylation of glycerol to yield sn-glycerol 3-phosphate. This is Glycerol kinase from Bradyrhizobium sp. (strain BTAi1 / ATCC BAA-1182).